A 594-amino-acid polypeptide reads, in one-letter code: Putative aldehyde oxidase Art an 7 (594 aa).

Positions 1 to 23 (MASSIKTVILFLLPLLLAYSVLA) are cleaved as a signal peptide. Residues 28–56 (TDGGDKPGPEIDDGGGDKPVPGNNDGASD) form a disordered region.

Post-translationally, the N-terminus is blocked. Glycosylated. Expressed in pollen (at protein level).

Its subcellular location is the cytoplasm. It catalyses the reaction an aldehyde + O2 + H2O = a carboxylate + H2O2 + H(+). Catalyzes the oxidation of aldehydes to the corresponding carboxylate by coupling the reaction to the reduction of dioxygen to hydrogen peroxide. Substrates include glyoxal and other aldehydes. Does not have enzymatic activity on D-galactose. The sequence is that of Putative aldehyde oxidase Art an 7 from Artemisia annua (Sweet wormwood).